Here is a 614-residue protein sequence, read N- to C-terminus: Nuclear receptor subfamily 1 group D member 1 (614 aa).

The segment covering 1–48 has biased composition (polar residues); it reads MTTLDSNNNTGGVITYIGSSGSSPNRTSPESLYSDSSNGSFQSLTQGC. The segment at 1–70 is required for phosphorylation by CSNK1E and cytoplasmic localization; it reads MTTLDSNNNT…TQDPARSFGS (70 aa). Positions 1–120 are disordered; the sequence is MTTLDSNNNT…GNRVSPSKST (120 aa). The interval 1–129 is modulating; that stretch reads MTTLDSNNNT…TSNITKLNGM (129 aa). The crucial for activation of GJA1 stretch occupies residues 49 to 285; the sequence is PTYFPPSPTG…PPRSPSPEPT (237 aa). Phosphoserine; by GSK3-beta occurs at positions 55 and 59. The segment covering 69–103 has biased composition (low complexity); that stretch reads GSIPPSLGDDGSPSSSSSSSSSSSSSFYNGSPPGG. Positions 130 to 206 form a DNA-binding region, nuclear receptor; sequence VLLCKVCGDV…VGMSRDAVRF (77 aa). NR C4-type zinc fingers lie at residues 133–153 and 170–194; these read CKVC…CEGC and CLKN…FKKC. K192 and K193 each carry N6-acetyllysine; by KAT5. The interval 233–286 is disordered; that stretch reads SSQCPLETPPTQHPTPGPMGPSPPPAPAPSPLVGFSQFPQQLTPPRSPSPEPTV. The segment covering 239–262 has biased composition (pro residues); sequence ETPPTQHPTPGPMGPSPPPAPAPS. T275 carries the post-translational modification Phosphothreonine; by CDK1. The NR LBD domain maps to 285 to 614; that stretch reads TVEDVISQVA…KLLSFRVDAQ (330 aa). C418 is a heme binding site. Residue K591 is modified to N6-acetyllysine. H602 lines the heme pocket.

It belongs to the nuclear hormone receptor family. NR1 subfamily. In terms of assembly, binds DNA as a monomer or a homodimer. Interacts with C1D, NR2E3, SP1 and ZNHIT1. Interacts with OPHN1 (via C-terminus). Interacts with PER2; the interaction associates PER2 to BMAL1 promoter region. Interacts with CRY1. Interacts with CCAR2. Interacts with SIAH2. Interacts with FBXW7 and CDK1. Interacts with HUWE1. Interacts with NR0B2. Interacts with NFIL3. Interacts (via domain NR LBD) with HSP90AA1 and HSP90AB1. Post-translationally, ubiquitinated, leading to its proteasomal degradation. Ubiquitinated by the SCF(FBXW7) complex when phosphorylated by CDK1 leading to its proteasomal degradation. Ubiquitinated by SIAH2; leading to its proteasomal degradation. Rapidly ubiquitinated in response to inflammatory triggers and sumoylation is a prerequisite to its ubiquitination. In terms of processing, sumoylated by UBE2I, desumoylated by SENP1, and sumoylation is a prerequisite to its ubiquitination. Phosphorylated by CSNK1E; phosphorylation enhances its cytoplasmic localization. Post-translationally, undergoes lysosome-mediated degradation in a time-dependent manner in the liver. In terms of tissue distribution, expressed in all tissues and cell lines examined. Expressed at high levels in some squamous carcinoma cell lines.

Its subcellular location is the nucleus. The protein resides in the cytoplasm. The protein localises to the cell projection. It localises to the dendrite. It is found in the dendritic spine. Functionally, transcriptional repressor which coordinates circadian rhythm and metabolic pathways in a heme-dependent manner. Integral component of the complex transcription machinery that governs circadian rhythmicity and forms a critical negative limb of the circadian clock by directly repressing the expression of core clock components BMAL1, CLOCK and CRY1. Also regulates genes involved in metabolic functions, including lipid and bile acid metabolism, adipogenesis, gluconeogenesis and the macrophage inflammatory response. Acts as a receptor for heme which stimulates its interaction with the NCOR1/HDAC3 corepressor complex, enhancing transcriptional repression. Recognizes two classes of DNA response elements within the promoter of its target genes and can bind to DNA as either monomers or homodimers, depending on the nature of the response element. Binds as a monomer to a response element composed of the consensus half-site motif 5'-[A/G]GGTCA-3' preceded by an A/T-rich 5' sequence (RevRE), or as a homodimer to a direct repeat of the core motif spaced by two nucleotides (RevDR-2). Acts as a potent competitive repressor of ROR alpha (RORA) function and regulates the levels of its ligand heme by repressing the expression of PPARGC1A, a potent inducer of heme synthesis. Regulates lipid metabolism by repressing the expression of APOC3 and by influencing the activity of sterol response element binding proteins (SREBPs); represses INSIG2 which interferes with the proteolytic activation of SREBPs which in turn govern the rhythmic expression of enzymes with key functions in sterol and fatty acid synthesis. Regulates gluconeogenesis via repression of G6PC1 and PEPCK and adipocyte differentiation via repression of PPARG. Regulates glucagon release in pancreatic alpha-cells via the AMPK-NAMPT-SIRT1 pathway and the proliferation, glucose-induced insulin secretion and expression of key lipogenic genes in pancreatic-beta cells. Positively regulates bile acid synthesis by increasing hepatic expression of CYP7A1 via repression of NR0B2 and NFIL3 which are negative regulators of CYP7A1. Modulates skeletal muscle oxidative capacity by regulating mitochondrial biogenesis and autophagy; controls mitochondrial biogenesis and respiration by interfering with the STK11-PRKAA1/2-SIRT1-PPARGC1A signaling pathway. Represses the expression of SERPINE1/PAI1, an important modulator of cardiovascular disease and the expression of inflammatory cytokines and chemokines in macrophages. Represses gene expression at a distance in macrophages by inhibiting the transcription of enhancer-derived RNAs (eRNAs). Plays a role in the circadian regulation of body temperature and negatively regulates thermogenic transcriptional programs in brown adipose tissue (BAT); imposes a circadian oscillation in BAT activity, increasing body temperature when awake and depressing thermogenesis during sleep. In concert with NR2E3, regulates transcriptional networks critical for photoreceptor development and function. In addition to its activity as a repressor, can also act as a transcriptional activator. In the ovarian granulosa cells acts as a transcriptional activator of STAR which plays a role in steroid biosynthesis. In collaboration with SP1, activates GJA1 transcription in a heme-independent manner. Represses the transcription of CYP2B10, CYP4A10 and CYP4A14. Represses the transcription of CES2. Represses and regulates the circadian expression of TSHB in a NCOR1-dependent manner. Negatively regulates the protein stability of NR3C1 and influences the time-dependent subcellular distribution of NR3C1, thereby affecting its transcriptional regulatory activity. Plays a critical role in the circadian control of neutrophilic inflammation in the lung; under resting, non-stress conditions, acts as a rhythmic repressor to limit inflammatory activity whereas in the presence of inflammatory triggers undergoes ubiquitin-mediated degradation thereby relieving inhibition of the inflammatory response. Plays a key role in the circadian regulation of microglial activation and neuroinflammation; suppresses microglial activation through the NF-kappaB pathway in the central nervous system. Plays a role in the regulation of the diurnal rhythms of lipid and protein metabolism in the skeletal muscle via transcriptional repression of genes controlling lipid and amino acid metabolism in the muscle. This chain is Nuclear receptor subfamily 1 group D member 1 (NR1D1), found in Ovis aries (Sheep).